Consider the following 168-residue polypeptide: Transcription antitermination protein NusB (168 aa).

It belongs to the NusB family.

Its function is as follows. Involved in transcription antitermination. Required for transcription of ribosomal RNA (rRNA) genes. Binds specifically to the boxA antiterminator sequence of the ribosomal RNA (rrn) operons. The protein is Transcription antitermination protein NusB of Deinococcus deserti (strain DSM 17065 / CIP 109153 / LMG 22923 / VCD115).